Reading from the N-terminus, the 351-residue chain is Translation initiation factor eIF2B subunit beta (351 aa).

Belongs to the eIF-2B alpha/beta/delta subunits family. As to quaternary structure, component of the translation initiation factor 2B (eIF2B) complex which is a heterodecamer of two sets of five different subunits: alpha, beta, gamma, delta and epsilon. Subunits alpha, beta and delta comprise a regulatory subcomplex and subunits epsilon and gamma comprise a catalytic subcomplex. Within the complex, the hexameric regulatory complex resides at the center, with the two heterodimeric catalytic subcomplexes bound on opposite sides.

It is found in the cytoplasm. Its subcellular location is the cytosol. Its activity is regulated as follows. Activated by the chemical integrated stress response (ISR) inhibitor ISRIB which stimulates guanine nucleotide exchange factor activity for both phosphorylated and unphosphorylated eIF2. Functionally, acts as a component of the translation initiation factor 2B (eIF2B) complex, which catalyzes the exchange of GDP for GTP on eukaryotic initiation factor 2 (eIF2) gamma subunit. Its guanine nucleotide exchange factor activity is repressed when bound to eIF2 complex phosphorylated on the alpha subunit, thereby limiting the amount of methionyl-initiator methionine tRNA available to the ribosome and consequently global translation is repressed. This chain is Translation initiation factor eIF2B subunit beta (Eif2b2), found in Mus musculus (Mouse).